A 549-amino-acid chain; its full sequence is Coiled-coil domain-containing protein 102A (549 aa).

3 disordered regions span residues 1–61 (MSHG…TAPA), 135–195 (LAGA…GSQE), and 207–248 (PEEP…EEDA). 3 positions are modified to phosphoserine: Ser-12, Ser-26, and Ser-28. The segment covering 37 to 55 (SLPPTPPSGTPSPGPPPSL) has biased composition (pro residues). A coiled-coil region spans residues 69–160 (ESREELRLRE…ARGRELARLR (92 aa)). Basic and acidic residues-rich tracts occupy residues 135-158 (LAGARRERQEAQGECEARGRELAR) and 165-187 (AADKTHDGPEPEREQEPVRDIGA). Coiled-coil stretches lie at residues 263–398 (KVLL…NASA) and 426–517 (KLKK…NAPL). Disordered regions lie at residues 472–496 (ELDEAHNQARKLQRSLDEQTEQSEN) and 509–549 (RRQQ…IQVA). Positions 530–549 (EAGDGASDLDEDEDLQIQVA) are enriched in acidic residues. Ser-536 bears the Phosphoserine mark.

The sequence is that of Coiled-coil domain-containing protein 102A (Ccdc102a) from Mus musculus (Mouse).